A 320-amino-acid chain; its full sequence is Lipoyl synthase (320 aa).

Positions 67, 72, 78, 93, 97, 100, and 307 each coordinate [4Fe-4S] cluster. The region spanning 79 to 296 is the Radical SAM core domain; sequence FNHGTATFMI…RDKANEMGFE (218 aa).

This sequence belongs to the radical SAM superfamily. Lipoyl synthase family. Requires [4Fe-4S] cluster as cofactor.

Its subcellular location is the cytoplasm. It catalyses the reaction [[Fe-S] cluster scaffold protein carrying a second [4Fe-4S](2+) cluster] + N(6)-octanoyl-L-lysyl-[protein] + 2 oxidized [2Fe-2S]-[ferredoxin] + 2 S-adenosyl-L-methionine + 4 H(+) = [[Fe-S] cluster scaffold protein] + N(6)-[(R)-dihydrolipoyl]-L-lysyl-[protein] + 4 Fe(3+) + 2 hydrogen sulfide + 2 5'-deoxyadenosine + 2 L-methionine + 2 reduced [2Fe-2S]-[ferredoxin]. Its pathway is protein modification; protein lipoylation via endogenous pathway; protein N(6)-(lipoyl)lysine from octanoyl-[acyl-carrier-protein]: step 2/2. Functionally, catalyzes the radical-mediated insertion of two sulfur atoms into the C-6 and C-8 positions of the octanoyl moiety bound to the lipoyl domains of lipoate-dependent enzymes, thereby converting the octanoylated domains into lipoylated derivatives. The protein is Lipoyl synthase of Haemophilus influenzae (strain PittEE).